Here is a 673-residue protein sequence, read N- to C-terminus: UvrABC system protein B (673 aa).

A Helicase ATP-binding domain is found at 26-183; sequence EGLEDGLAHQ…RRLAELQYAR (158 aa). Residue 39 to 46 participates in ATP binding; sequence GVTGSGKT. The Beta-hairpin motif lies at 92–115; sequence YYDYYQPEAYVPSSDTFIEKDASV. A Helicase C-terminal domain is found at 431–597; it reads QVDDLLSEIR…GLNKKVVDIL (167 aa). A disordered region spans residues 608–627; it reads AKGRGKSRPIVEPDNVPMDM. Positions 633 to 668 constitute a UVR domain; that stretch reads QQKIHELEGLMMQHAQNLEFEEAAQIRDQLHQLRDL.

It belongs to the UvrB family. Forms a heterotetramer with UvrA during the search for lesions. Interacts with UvrC in an incision complex.

Its subcellular location is the cytoplasm. Its function is as follows. The UvrABC repair system catalyzes the recognition and processing of DNA lesions. A damage recognition complex composed of 2 UvrA and 2 UvrB subunits scans DNA for abnormalities. Upon binding of the UvrA(2)B(2) complex to a putative damaged site, the DNA wraps around one UvrB monomer. DNA wrap is dependent on ATP binding by UvrB and probably causes local melting of the DNA helix, facilitating insertion of UvrB beta-hairpin between the DNA strands. Then UvrB probes one DNA strand for the presence of a lesion. If a lesion is found the UvrA subunits dissociate and the UvrB-DNA preincision complex is formed. This complex is subsequently bound by UvrC and the second UvrB is released. If no lesion is found, the DNA wraps around the other UvrB subunit that will check the other stand for damage. In Escherichia coli O7:K1 (strain IAI39 / ExPEC), this protein is UvrABC system protein B.